The sequence spans 704 residues: Phosphatidylinositol-3,5-bisphosphate 3-phosphatase MTMR8 (704 aa).

Residues 126 to 500 (GWKLIDPISD…YNIQFWCGMY (375 aa)) enclose the Myotubularin phosphatase domain. Asn250, Asn275, and Ile276 together coordinate a 1,2-diacyl-sn-glycero-3-phospho-(1D-myo-inositol-3,5-bisphosphate). A 1,2-diacyl-sn-glycero-3-phospho-(1D-myo-inositol-3-phosphate)-binding residues include Asn250, Asn275, and Ile276. The active-site Phosphocysteine intermediate is Cys338. The a 1,2-diacyl-sn-glycero-3-phospho-(1D-myo-inositol-3,5-bisphosphate) site is built by Ser339, Asp340, Gly341, Trp342, Asp343, Arg344, Lys380, and Arg384. Residues Ser339, Asp340, Gly341, Trp342, Asp343, and Arg344 each contribute to the a 1,2-diacyl-sn-glycero-3-phospho-(1D-myo-inositol-3-phosphate) site. Ser339 and Asp340 together coordinate phosphate. Positions 342, 343, and 344 each coordinate phosphate. Arg384 lines the a 1,2-diacyl-sn-glycero-3-phospho-(1D-myo-inositol-3-phosphate) pocket. Positions 515–541 (ESLLEIKKQRAMLETDVHELEKKLKVR) form a coiled coil.

The protein belongs to the protein-tyrosine phosphatase family. Non-receptor class myotubularin subfamily. Homodimer. Heterodimer with MTMR9.

Its subcellular location is the nucleus envelope. It catalyses the reaction a 1,2-diacyl-sn-glycero-3-phospho-(1D-myo-inositol-3,5-bisphosphate) + H2O = a 1,2-diacyl-sn-glycero-3-phospho-(1D-myo-inositol-5-phosphate) + phosphate. The catalysed reaction is a 1,2-diacyl-sn-glycero-3-phospho-(1D-myo-inositol-3-phosphate) + H2O = a 1,2-diacyl-sn-glycero-3-phospho-(1D-myo-inositol) + phosphate. The enzyme catalyses 1,2-dioctanoyl-sn-glycero-3-phospho-(1D-myo-inositol-3,5-bisphosphate) + H2O = 1,2-dioctanoyl-sn-glycero-3-phospho-(1D-myo-inositol-5-phosphate) + phosphate. Its activity is regulated as follows. Interaction with MTMR9 increases phosphatase activity. Lipid phosphatase that specifically dephosphorylates the D-3 position of phosphatidylinositol 3-phosphate and phosphatidylinositol 3,5-bisphosphate, generating phosphatidylinositol and phosphatidylinositol 5-phosphate. In complex with MTMR9, negatively regulates autophagy. This is Phosphatidylinositol-3,5-bisphosphate 3-phosphatase MTMR8 from Homo sapiens (Human).